The following is a 63-amino-acid chain: MKAKELREKSVEELNTELLNLLREQFNLRMQVASGQLQQSHLLKQVRRDVARVKTLLNEKAGA.

The protein belongs to the universal ribosomal protein uL29 family.

This Shigella dysenteriae serotype 1 (strain Sd197) protein is Large ribosomal subunit protein uL29.